Consider the following 457-residue polypeptide: Argininosuccinate lyase (457 aa).

This sequence belongs to the lyase 1 family. Argininosuccinate lyase subfamily.

It localises to the cytoplasm. It carries out the reaction 2-(N(omega)-L-arginino)succinate = fumarate + L-arginine. The protein operates within amino-acid biosynthesis; L-arginine biosynthesis; L-arginine from L-ornithine and carbamoyl phosphate: step 3/3. In Shigella flexneri serotype 5b (strain 8401), this protein is Argininosuccinate lyase.